The chain runs to 55 residues: Large ribosomal subunit protein bL32 (55 aa).

Positions 1 to 27 (MAVQQNKPTRSKRGMRRSHDALTTATL) are disordered.

The protein belongs to the bacterial ribosomal protein bL32 family.

This Yersinia enterocolitica serotype O:8 / biotype 1B (strain NCTC 13174 / 8081) protein is Large ribosomal subunit protein bL32.